The primary structure comprises 125 residues: Phosphoribosyl-AMP cyclohydrolase (125 aa).

Mg(2+) is bound at residue Asp74. Cys75 provides a ligand contact to Zn(2+). The Mg(2+) site is built by Asp76 and Asp78. Zn(2+)-binding residues include Cys92 and Cys99.

This sequence belongs to the PRA-CH family. As to quaternary structure, homodimer. The cofactor is Mg(2+). Zn(2+) is required as a cofactor.

The protein localises to the cytoplasm. It carries out the reaction 1-(5-phospho-beta-D-ribosyl)-5'-AMP + H2O = 1-(5-phospho-beta-D-ribosyl)-5-[(5-phospho-beta-D-ribosylamino)methylideneamino]imidazole-4-carboxamide. The protein operates within amino-acid biosynthesis; L-histidine biosynthesis; L-histidine from 5-phospho-alpha-D-ribose 1-diphosphate: step 3/9. Its function is as follows. Catalyzes the hydrolysis of the adenine ring of phosphoribosyl-AMP. The sequence is that of Phosphoribosyl-AMP cyclohydrolase from Geotalea uraniireducens (strain Rf4) (Geobacter uraniireducens).